Consider the following 881-residue polypeptide: Translation initiation factor IF-2 (881 aa).

Disordered stretches follow at residues 31-147 (KLAQ…TKVP) and 165-291 (SVVG…HYDE). The span at 42 to 55 (NSSEKPSAKVAEKV) shows a compositional bias: basic and acidic residues. The segment covering 68-77 (ATPESVSSET) has biased composition (polar residues). Residues 114 to 128 (VEEEIASSTDSEPEV) show a composition bias toward acidic residues. Residues 191–203 (PKKEDKPAPKERS) show a composition bias toward basic and acidic residues. A compositionally biased stretch (polar residues) spans 204–233 (GQAQAKPQQSSEASSENKPHSPNNNRSSQP). A compositionally biased stretch (basic and acidic residues) spans 235-267 (YRRDTSKKPGSDFRDRAKKDDNPKAFTGRDRYG). Over residues 278 to 287 (RKKRVQKTKK) the composition is skewed to basic residues. In terms of domain architecture, tr-type G spans 387 to 556 (IRPPIVAFMG…ALQAEVLELK (170 aa)). The G1 stretch occupies residues 396 to 403 (GHVDHGKT). GTP is bound at residue 396–403 (GHVDHGKT). A G2 region spans residues 421–425 (AITQH). A G3 region spans residues 442 to 445 (DTPG). GTP contacts are provided by residues 442 to 446 (DTPGH) and 496 to 499 (NKCD). Residues 496–499 (NKCD) are G4. Residues 532–534 (SAK) are G5.

The protein belongs to the TRAFAC class translation factor GTPase superfamily. Classic translation factor GTPase family. IF-2 subfamily.

The protein localises to the cytoplasm. Functionally, one of the essential components for the initiation of protein synthesis. Protects formylmethionyl-tRNA from spontaneous hydrolysis and promotes its binding to the 30S ribosomal subunits. Also involved in the hydrolysis of GTP during the formation of the 70S ribosomal complex. This chain is Translation initiation factor IF-2, found in Chlamydia felis (strain Fe/C-56) (Chlamydophila felis).